The following is a 699-amino-acid chain: Elongation factor G (699 aa).

The tr-type G domain maps to 8-283 (EHIRNIGICA…AVVDFLPSPI (276 aa)). Residues 17–24 (AHIDAGKT), 81–85 (DTPGH), and 135–138 (NKMD) contribute to the GTP site.

It belongs to the TRAFAC class translation factor GTPase superfamily. Classic translation factor GTPase family. EF-G/EF-2 subfamily.

Its subcellular location is the cytoplasm. In terms of biological role, catalyzes the GTP-dependent ribosomal translocation step during translation elongation. During this step, the ribosome changes from the pre-translocational (PRE) to the post-translocational (POST) state as the newly formed A-site-bound peptidyl-tRNA and P-site-bound deacylated tRNA move to the P and E sites, respectively. Catalyzes the coordinated movement of the two tRNA molecules, the mRNA and conformational changes in the ribosome. This chain is Elongation factor G, found in Rickettsia rickettsii.